We begin with the raw amino-acid sequence, 406 residues long: Acetamidase (406 aa).

A compositionally biased stretch (low complexity) spans Cys-387 to Arg-399. Residues Cys-387–Arg-406 form a disordered region.

It belongs to the acetamidase/formamidase family.

The catalysed reaction is a monocarboxylic acid amide + H2O = a monocarboxylate + NH4(+). The enzyme catalyses acetamide + H2O = acetate + NH4(+). Its function is as follows. Allows acetamide to be used as a sole carbon or nitrogen source. The polypeptide is Acetamidase (amdA) (Mycolicibacterium smegmatis (Mycobacterium smegmatis)).